We begin with the raw amino-acid sequence, 306 residues long: D-alanine--D-alanine ligase (306 aa).

The region spanning Arg101–Glu300 is the ATP-grasp domain. Met128–Thr182 provides a ligand contact to ATP. Mg(2+) is bound by residues Asp250, Glu267, and Asn269.

This sequence belongs to the D-alanine--D-alanine ligase family. Mg(2+) serves as cofactor. It depends on Mn(2+) as a cofactor.

The protein resides in the cytoplasm. It carries out the reaction 2 D-alanine + ATP = D-alanyl-D-alanine + ADP + phosphate + H(+). Its pathway is cell wall biogenesis; peptidoglycan biosynthesis. Its function is as follows. Cell wall formation. The polypeptide is D-alanine--D-alanine ligase (Xanthobacter autotrophicus (strain ATCC BAA-1158 / Py2)).